Consider the following 166-residue polypeptide: MEMSNAQRLILSNQYNLMSQLDPSNAAKYKRLQTIVERGYELQMRELNKDFGCITETECREIIDIMEMYHAMQESNKMLDDEERGKVDQRRLQFLGFDIATEAQQVHYVRFLVDSEGLYPQFDKADHHFNSQMPMLDKYRRMLKTWRNCPRQYHLCANELAQIFSA.

Belongs to the UPF0304 family.

This is UPF0304 protein VIBHAR_01542 from Vibrio campbellii (strain ATCC BAA-1116).